The primary structure comprises 1270 residues: Myosin-binding protein C, cardiac-type (1270 aa).

M1 is modified (N-acetylmethionine). A disordered region spans residues 1–24 (MPEPGKKPVSAFNKKPRSAEVTAG). A phosphoserine mark is found at S47 and S72. The span at 94-105 (VTEPAPPEKAES) shows a compositional bias: basic and acidic residues. The tract at residues 94 to 152 (VTEPAPPEKAESEVAPGAPEEVPAPATELEESVSSPEGSVSVTQDGSAAEHQGAPDDPI) is disordered. Low complexity predominate over residues 106–135 (EVAPGAPEEVPAPATELEESVSSPEGSVSV). The region spanning 151–254 (PIGLFLMRPQ…FDSCNFNLTV (104 aa)) is the Ig-like C2-type 1 domain. The Zn(2+) site is built by Q206, H208, E221, and H223. S273, S282, and S302 each carry phosphoserine; by PKA and PKC. 2 positions are modified to phosphoserine: S307 and S423. Ig-like C2-type domains follow at residues 358-448 (STAF…VKEP), 449-539 (PVLI…VQEK), 540-629 (KLEV…HFME), and 641-767 (PKIH…VIDV). An intrachain disulfide couples C432 to C439. Residues S455 and S546 each carry the phosphoserine modification. At T603 the chain carries Phosphothreonine. Positions 683–702 (VTQGKKASAGPHPDAPEDAG) are disordered. Fibronectin type-III domains lie at 770 to 866 (APAA…IGPP) and 868 to 963 (EPTH…VQEI). One can recognise an Ig-like C2-type 6 domain in the interval 967–1061 (PRLQLPRHLR…ATLILQIVDK (95 aa)). The region spanning 1064–1159 (PPQDIRIVET…TKEPVFIPRP (96 aa)) is the Fibronectin type-III 3 domain. One can recognise an Ig-like C2-type 7 domain in the interval 1177 to 1270 (PSFTQPLANR…ECRLEVRVPQ (94 aa)). R1237 is modified (omega-N-methylarginine).

Belongs to the immunoglobulin superfamily. MyBP family. In terms of processing, substrate for phosphorylation by PKA and PKC. Reversible phosphorylation appears to modulate contraction. Polyubiquitinated.

Its function is as follows. Thick filament-associated protein located in the crossbridge region of vertebrate striated muscle a bands. In vitro it binds MHC, F-actin and native thin filaments, and modifies the activity of actin-activated myosin ATPase. It may modulate muscle contraction or may play a more structural role. This chain is Myosin-binding protein C, cardiac-type (Mybpc3), found in Mus musculus (Mouse).